We begin with the raw amino-acid sequence, 422 residues long: Probable FBD-associated F-box protein At1g32375 (422 aa).

Residues 1-53 enclose the F-box domain; the sequence is MDKLSQLPEALLVRILSLLSAKDVVSTMVLSKRWQFLWMLVPKLIYDDSYQAI. In terms of domain architecture, FBD spans 342 to 392; that stretch reads CWNEPSAVPECLLTSLETLEWVKYEGTEEEKEVAAFILRSGSCLKKVTISS.

The protein is Probable FBD-associated F-box protein At1g32375 of Arabidopsis thaliana (Mouse-ear cress).